The chain runs to 244 residues: tRNA pseudouridine synthase A (244 aa).

Residue Asp-52 is the Nucleophile of the active site. Tyr-110 is a binding site for substrate.

This sequence belongs to the tRNA pseudouridine synthase TruA family. In terms of assembly, homodimer.

The enzyme catalyses uridine(38/39/40) in tRNA = pseudouridine(38/39/40) in tRNA. In terms of biological role, formation of pseudouridine at positions 38, 39 and 40 in the anticodon stem and loop of transfer RNAs. In Pelobacter propionicus (strain DSM 2379 / NBRC 103807 / OttBd1), this protein is tRNA pseudouridine synthase A.